A 347-amino-acid polypeptide reads, in one-letter code: NADH-ubiquinone oxidoreductase chain 2 (347 aa).

The next 11 membrane-spanning stretches (helical) occupy residues 3–23 (PLIL…VMMS), 25–45 (HWLM…PLLM), 59–79 (YFLT…INLM), 96–116 (IIMT…FWVP), 122–142 (ISLT…LSIL), 148–168 (VINP…GGWG), 178–198 (ILAY…AFNP), 202–222 (LLNL…FMVA), 240–260 (ITTS…LAGF), 276–296 (IILA…YIRL), and 326–346 (LPPL…MILL).

It belongs to the complex I subunit 2 family. As to quaternary structure, core subunit of respiratory chain NADH dehydrogenase (Complex I) which is composed of 45 different subunits. Interacts with TMEM242.

It is found in the mitochondrion inner membrane. The enzyme catalyses a ubiquinone + NADH + 5 H(+)(in) = a ubiquinol + NAD(+) + 4 H(+)(out). Functionally, core subunit of the mitochondrial membrane respiratory chain NADH dehydrogenase (Complex I) which catalyzes electron transfer from NADH through the respiratory chain, using ubiquinone as an electron acceptor. Essential for the catalytic activity and assembly of complex I. The sequence is that of NADH-ubiquinone oxidoreductase chain 2 from Peropteryx kappleri (Greater dog-like bat).